The sequence spans 655 residues: p-hydroxybenzoic acid efflux pump subunit AaeB (655 aa).

Helical transmembrane passes span 13-33, 38-58, 69-89, 93-113, 121-141, 152-172, 370-390, 407-427, 431-451, and 482-502; these read FAVK…HFQL, WAVL…GGEP, LRII…IAMI, LLMI…SSLV, WGLA…EPLL, EIVI…PRSI, LFWL…IAVV, FIYG…VIIP, QSML…GIEV, and FLDS…VILL.

The protein belongs to the aromatic acid exporter ArAE (TC 2.A.85) family.

Its subcellular location is the cell inner membrane. Functionally, forms an efflux pump with AaeA. Could function as a metabolic relief valve, allowing to eliminate certain compounds when they accumulate to high levels in the cell. This chain is p-hydroxybenzoic acid efflux pump subunit AaeB, found in Shigella dysenteriae serotype 1 (strain Sd197).